A 394-amino-acid polypeptide reads, in one-letter code: MSFIKQVGKLIRPNDYSSSIFQTSFLNNVIQVRTATKRAAGSKTNKNDSAGRRLGPKAYEGHFVKPGQIIMRQRGTKIHPGENVDIGKDHTIFAIEPGYVRFYYDPFHPLRKYVGIALRKDLNLPTPHFSPRVRRFGYEKITDPAEAEKEENHMSRKEFLQQPELEKTRQEQQNQEEQRASAFRNALSSQFNLDLSEADFQLALNRLLNISQLTNVGQTLEDAEVQSTYNYVFDLKLSCKRGEMTSEEFSNLKMHYIQFAENFDKKVTIDAQGNPCTYVTPEAKKENQNEILSKLENEFSNRVISEKDKETIFDLIMTPGIYNLSQQSYLKDRFLPSVLPTTVKETVVEDVDPKKPPKGVIVTRIFDEETKQIKVIGRTKEAYIGQTDLDKSLA.

The N-terminal 34 residues, Met-1–Thr-34, are a transit peptide targeting the mitochondrion. Disordered stretches follow at residues Thr-36–Lys-57 and Ala-145–Ser-181. Over residues Ala-145 to Gln-170 the composition is skewed to basic and acidic residues.

Belongs to the bacterial ribosomal protein bL27 family.

The protein localises to the mitochondrion. In terms of biological role, component of the large subunit of mitochondrial ribosome. The sequence is that of Large ribosomal subunit protein bL27m (MRPL2) from Debaryomyces hansenii (strain ATCC 36239 / CBS 767 / BCRC 21394 / JCM 1990 / NBRC 0083 / IGC 2968) (Yeast).